A 280-amino-acid chain; its full sequence is MRPAIKVGLSTASVYPLRAEAAFEYADRLGYDGVELMVWGESVSQDIDAVRKLSRRYRVPVLSVHAPCLLISQRVWGANPILKLDRSVRAAEQLGAQTVVVHPPFRWQRRYAEGFSDQVAALEAASTVMVAVENMFPFRADRFFGAGQSRERMRKRGGGPGPAISAFAPSYDPLDGNHAHYTLDLSHTATAGTDSLDMARRMGPGLVHLHLCDGSGLPADEHLVPGRGTQPTAEVCQMLAGSGFVGHVVLEVSTSSARSANERESMLAESLQFARTHLLR.

A signal peptide spans 1-21 (MRPAIKVGLSTASVYPLRAEA).

The protein to M.leprae ML2432 and S.coelicolor SCO3347.

This is an uncharacterized protein from Mycobacterium tuberculosis (strain CDC 1551 / Oshkosh).